The chain runs to 427 residues: MTQLEMAGQGRVTEEMKLCAEKEGVSPEFIRRGVEEGSIVVVRNNRHTGIAPLAIGKGLRTKVNANLGTSRDHVDLEMELEKVRICTKAGADALMDLSTGGEIRAIRQAIVNASTMAVGTVPIYAAAAEALNSRKSIMEMTADEMFQAIEENGEDGVDFITVHCGVTRESVGRIAAQGRLLGIVSRGGSITARWMDYNDAENPLYAQYDRLLEIARRYDMVLSLGDGLRPGCLADATDRGQVQELIILGELCRRARARDVQVMIEGPGHVPYPQIEANIALQKSLCEGAPFYVLGPLPTDIAPGYDHITAAIGGALAGAAGADFLCYVTPSEHLCLPNLDDVHEGIVASRIAAHIADIAKGYPGAMEKDILMAKYRSEFNWNGQIDLSVDPDRSRARLERSETAKEEGCTMCGDLCAIKLGKKKAPC.

Substrate is bound by residues N66, M95, Y124, H163, 185 to 187, 226 to 229, and E265; these read SRG and DGLR. H269 lines the Zn(2+) pocket. Y292 contacts substrate. H333 lines the Zn(2+) pocket. [4Fe-4S] cluster-binding residues include C409, C412, and C416.

Belongs to the ThiC family. Homodimer. The cofactor is [4Fe-4S] cluster.

It carries out the reaction 5-amino-1-(5-phospho-beta-D-ribosyl)imidazole + S-adenosyl-L-methionine = 4-amino-2-methyl-5-(phosphooxymethyl)pyrimidine + CO + 5'-deoxyadenosine + formate + L-methionine + 3 H(+). Its pathway is cofactor biosynthesis; thiamine diphosphate biosynthesis. Its function is as follows. Catalyzes the synthesis of the hydroxymethylpyrimidine phosphate (HMP-P) moiety of thiamine from aminoimidazole ribotide (AIR) in a radical S-adenosyl-L-methionine (SAM)-dependent reaction. The sequence is that of Phosphomethylpyrimidine synthase from Syntrophus aciditrophicus (strain SB).